We begin with the raw amino-acid sequence, 89 residues long: Large ribosomal subunit protein bL28 (89 aa).

The protein belongs to the bacterial ribosomal protein bL28 family.

The polypeptide is Large ribosomal subunit protein bL28 (Chlamydia trachomatis serovar L2 (strain ATCC VR-902B / DSM 19102 / 434/Bu)).